The chain runs to 513 residues: NAD(P)H-quinone oxidoreductase subunit 2 (513 aa).

14 consecutive transmembrane segments (helical) span residues 15–35, 43–63, 80–100, 110–130, 133–153, 168–188, 211–231, 245–265, 281–301, 307–327, 335–355, 379–399, 401–421, and 467–487; these read VIWP…GDLI, WLPY…YFTW, LSIV…LMSI, LAEF…LSGA, LVMI…MTGY, LLIG…LYGL, LALA…ISAV, PTPV…ALAI, FIFI…ALAQ, MLAY…TAGT, IFYL…VILF, LCLS…GFFG, IYLF…VGLV, and VGIV…NPLF.

This sequence belongs to the complex I subunit 2 family. As to quaternary structure, NDH-1 can be composed of about 15 different subunits; different subcomplexes with different compositions have been identified which probably have different functions.

The protein resides in the cellular thylakoid membrane. The enzyme catalyses a plastoquinone + NADH + (n+1) H(+)(in) = a plastoquinol + NAD(+) + n H(+)(out). It catalyses the reaction a plastoquinone + NADPH + (n+1) H(+)(in) = a plastoquinol + NADP(+) + n H(+)(out). Its function is as follows. NDH-1 shuttles electrons from an unknown electron donor, via FMN and iron-sulfur (Fe-S) centers, to quinones in the respiratory and/or the photosynthetic chain. The immediate electron acceptor for the enzyme in this species is believed to be plastoquinone. Couples the redox reaction to proton translocation, and thus conserves the redox energy in a proton gradient. Cyanobacterial NDH-1 also plays a role in inorganic carbon-concentration. The chain is NAD(P)H-quinone oxidoreductase subunit 2 from Microcystis aeruginosa (strain NIES-843 / IAM M-2473).